We begin with the raw amino-acid sequence, 666 residues long: DEAD-box ATP-dependent RNA helicase 30 (666 aa).

The interval 53–102 is disordered; it reads PDPNLPRRLPFPSSSSTPTAAAPPDSGEPSRARARTETYRTGDMNPYDLR. The span at 64-76 shows a compositional bias: low complexity; the sequence is PSSSSTPTAAAPP. Residues 80-92 are compositionally biased toward basic and acidic residues; it reads EPSRARARTETYR. The short motif at 251–279 is the Q motif element; sequence RYFQEANFPDYCMQAIAKSGFVEPTPIQS. One can recognise a Helicase ATP-binding domain in the interval 282–457; the sequence is WPMALKGRDM…RQFLQNPYKV (176 aa). 295 to 302 contributes to the ATP binding site; sequence AQTGSGKT. The DEAD box signature appears at 405 to 408; it reads DEAD. The 146-residue stretch at 485 to 630 folds into the Helicase C-terminal domain; sequence RLSKLLSDLM…VVNPALESMA (146 aa). The tract at residues 632–666 is disordered; sequence SASSMGGGNFRSRGRGGFGNRSGSNSIPIRGRRPY. Gly residues predominate over residues 636–651; sequence MGGGNFRSRGRGGFGN.

This sequence belongs to the DEAD box helicase family. DDX5/DBP2 subfamily.

The protein resides in the nucleus. The enzyme catalyses ATP + H2O = ADP + phosphate + H(+). Its function is as follows. ATP-dependent RNA helicase involved nonsense-mediated mRNA decay and ribosome biogenesis through rRNA processing. The polypeptide is DEAD-box ATP-dependent RNA helicase 30 (Oryza sativa subsp. japonica (Rice)).